Here is a 104-residue protein sequence, read N- to C-terminus: Probable RNA-binding protein PA4753 (104 aa).

Residues 1 to 97 enclose the CRM domain; that stretch reads MALTQEQKKQ…NPKPNKNLSN (97 aa).

The polypeptide is Probable RNA-binding protein PA4753 (Pseudomonas aeruginosa (strain ATCC 15692 / DSM 22644 / CIP 104116 / JCM 14847 / LMG 12228 / 1C / PRS 101 / PAO1)).